A 421-amino-acid polypeptide reads, in one-letter code: UDP-N-acetylglucosamine 1-carboxyvinyltransferase 2 (421 aa).

Position 22 to 23 (22 to 23 (KN)) interacts with phosphoenolpyruvate. UDP-N-acetyl-alpha-D-glucosamine is bound at residue Arg95. Cys119 serves as the catalytic Proton donor. Residue Cys119 is modified to 2-(S-cysteinyl)pyruvic acid O-phosphothioketal. Residues 124–128 (RPIEQ), Asp308, and Val330 each bind UDP-N-acetyl-alpha-D-glucosamine.

This sequence belongs to the EPSP synthase family. MurA subfamily.

Its subcellular location is the cytoplasm. It catalyses the reaction phosphoenolpyruvate + UDP-N-acetyl-alpha-D-glucosamine = UDP-N-acetyl-3-O-(1-carboxyvinyl)-alpha-D-glucosamine + phosphate. It functions in the pathway cell wall biogenesis; peptidoglycan biosynthesis. Cell wall formation. Adds enolpyruvyl to UDP-N-acetylglucosamine. In Staphylococcus saprophyticus subsp. saprophyticus (strain ATCC 15305 / DSM 20229 / NCIMB 8711 / NCTC 7292 / S-41), this protein is UDP-N-acetylglucosamine 1-carboxyvinyltransferase 2.